The following is a 124-amino-acid chain: Small ribosomal subunit protein uS12 (124 aa).

A 3-methylthioaspartic acid modification is found at Asp89.

It belongs to the universal ribosomal protein uS12 family. As to quaternary structure, part of the 30S ribosomal subunit. Contacts proteins S8 and S17. May interact with IF1 in the 30S initiation complex.

Its function is as follows. With S4 and S5 plays an important role in translational accuracy. Interacts with and stabilizes bases of the 16S rRNA that are involved in tRNA selection in the A site and with the mRNA backbone. Located at the interface of the 30S and 50S subunits, it traverses the body of the 30S subunit contacting proteins on the other side and probably holding the rRNA structure together. The combined cluster of proteins S8, S12 and S17 appears to hold together the shoulder and platform of the 30S subunit. This Moorella thermoacetica (strain ATCC 39073 / JCM 9320) protein is Small ribosomal subunit protein uS12.